A 384-amino-acid polypeptide reads, in one-letter code: Putative exopolyphosphatase (384 aa).

5 residues coordinate Mn(2+): D40, D42, D116, H138, and D200.

The protein belongs to the PPase class C family. The cofactor is Mn(2+).

It carries out the reaction [phosphate](n) + H2O = [phosphate](n-1) + phosphate + H(+). Its function is as follows. Degradation of inorganic polyphosphates. This chain is Putative exopolyphosphatase, found in Schizosaccharomyces pombe (strain 972 / ATCC 24843) (Fission yeast).